A 166-amino-acid chain; its full sequence is NADPH-dependent 7-cyano-7-deazaguanine reductase (166 aa).

Cys-57 serves as the catalytic Thioimide intermediate. Asp-64 serves as the catalytic Proton donor. Substrate-binding positions include 79–81 (VES) and 98–99 (HE).

It belongs to the GTP cyclohydrolase I family. QueF type 1 subfamily.

The protein localises to the cytoplasm. The enzyme catalyses 7-aminomethyl-7-carbaguanine + 2 NADP(+) = 7-cyano-7-deazaguanine + 2 NADPH + 3 H(+). It functions in the pathway tRNA modification; tRNA-queuosine biosynthesis. Catalyzes the NADPH-dependent reduction of 7-cyano-7-deazaguanine (preQ0) to 7-aminomethyl-7-deazaguanine (preQ1). This is NADPH-dependent 7-cyano-7-deazaguanine reductase from Staphylococcus epidermidis (strain ATCC 35984 / DSM 28319 / BCRC 17069 / CCUG 31568 / BM 3577 / RP62A).